The sequence spans 369 residues: Hsc70-interacting protein (369 aa).

The interval 38–97 (MGGKVPPATQKAKSEENTKEEKPDSKKVEEDLKADEPSSEESDLEIDKEGVIEPDTDAPQ) is disordered. The segment covering 49 to 73 (AKSEENTKEEKPDSKKVEEDLKADE) has biased composition (basic and acidic residues). TPR repeat units follow at residues 114-147 (ANDKKVAAIEALNDGELQKAIDLFTDAIKLNPRL), 148-181 (AILYAKRASVFVKLQKPNAAIRDCDRAIEINPDS), and 182-215 (AQPYKWRGKAHRLLGHWEEAAHDLALACKLDYDE). The segment covering 256 to 272 (KAREEHERAQREEEARR) has biased composition (basic and acidic residues). Residues 256 to 300 (KAREEHERAQREEEARRQSGAQYGSFPGGFPGGMPGNFPGGMPGM) form a disordered region. The segment covering 281 to 300 (FPGGFPGGMPGNFPGGMPGM) has biased composition (gly residues). The region spanning 319–358 (DPEVLAAMQDPEVMVAFQDVAQNPANMSKYQSNPKVMNLI) is the STI1 domain. Ser-346 is subject to Phosphoserine; by GRK5. An N6-acetyllysine mark is found at Lys-353 and Lys-360.

This sequence belongs to the FAM10 family. As to quaternary structure, homotetramer. Interacts with HSC70 as well as DNAJ homologs and HSP90. Interacts (via the C-terminus 303- 319 AA) with GRK5.

It is found in the cytoplasm. Functionally, one HIP oligomer binds the ATPase domains of at least two HSC70 molecules dependent on activation of the HSC70 ATPase by HSP40. Stabilizes the ADP state of HSC70 that has a high affinity for substrate protein. Through its own chaperone activity, it may contribute to the interaction of HSC70 with various target proteins. The chain is Hsc70-interacting protein (ST13) from Homo sapiens (Human).